We begin with the raw amino-acid sequence, 121 residues long: Dihydroneopterin aldolase (121 aa).

Residues Glu-22, Tyr-54, and 73 to 74 (IE) contribute to the substrate site. Lys-100 serves as the catalytic Proton donor/acceptor.

The protein belongs to the DHNA family. In terms of assembly, homooctamer. Four molecules assemble into a ring, and two rings come together to give a cylinder with a hole of at least 13 a diameter.

It catalyses the reaction 7,8-dihydroneopterin = 6-hydroxymethyl-7,8-dihydropterin + glycolaldehyde. The enzyme catalyses 7,8-dihydroneopterin = 7,8-dihydromonapterin. The protein operates within cofactor biosynthesis; tetrahydrofolate biosynthesis; 2-amino-4-hydroxy-6-hydroxymethyl-7,8-dihydropteridine diphosphate from 7,8-dihydroneopterin triphosphate: step 3/4. Catalyzes the conversion of 7,8-dihydroneopterin to 6-hydroxymethyl-7,8-dihydropterin. Can also catalyze the epimerization of carbon 2' of dihydroneopterin to dihydromonapterin. This Staphylococcus epidermidis (strain ATCC 35984 / DSM 28319 / BCRC 17069 / CCUG 31568 / BM 3577 / RP62A) protein is Dihydroneopterin aldolase (folB).